Consider the following 224-residue polypeptide: 7-cyano-7-deazaguanine synthase (224 aa).

Position 9–19 (9–19 (ISGGMDSTLCA)) interacts with ATP. Residues Cys190, Cys198, Cys201, and Cys204 each contribute to the Zn(2+) site.

It belongs to the QueC family. Requires Zn(2+) as cofactor.

It carries out the reaction 7-carboxy-7-deazaguanine + NH4(+) + ATP = 7-cyano-7-deazaguanine + ADP + phosphate + H2O + H(+). It participates in purine metabolism; 7-cyano-7-deazaguanine biosynthesis. Functionally, catalyzes the ATP-dependent conversion of 7-carboxy-7-deazaguanine (CDG) to 7-cyano-7-deazaguanine (preQ(0)). This chain is 7-cyano-7-deazaguanine synthase, found in Campylobacter jejuni (strain RM1221).